The primary structure comprises 338 residues: Formamidase (338 aa).

The 243-residue stretch at 15 to 257 folds into the CN hydrolase domain; the sequence is VVIGLAQLAL…DEIVCCELRP (243 aa). Glu-61 (proton acceptor) is an active-site residue. Lys-130 functions as the Proton donor in the catalytic mechanism. The active-site Nucleophile is Cys-163.

It belongs to the carbon-nitrogen hydrolase superfamily. Aliphatic amidase family.

It carries out the reaction formamide + H2O = formate + NH4(+). In terms of biological role, is an aliphatic amidase with a restricted substrate specificity, as it only hydrolyzes formamide. The sequence is that of Formamidase from Pseudomonas syringae pv. tomato (strain ATCC BAA-871 / DC3000).